Here is a 72-residue protein sequence, read N- to C-terminus: DNA-directed RNA polymerase subunit Rpo10 (72 aa).

Residues Cys7, Cys10, Cys45, and Cys46 each contribute to the Zn(2+) site.

It belongs to the archaeal Rpo10/eukaryotic RPB10 RNA polymerase subunit family. In terms of assembly, part of the RNA polymerase complex. Zn(2+) serves as cofactor.

The protein localises to the cytoplasm. The catalysed reaction is RNA(n) + a ribonucleoside 5'-triphosphate = RNA(n+1) + diphosphate. Functionally, DNA-dependent RNA polymerase (RNAP) catalyzes the transcription of DNA into RNA using the four ribonucleoside triphosphates as substrates. The polypeptide is DNA-directed RNA polymerase subunit Rpo10 (Methanopyrus kandleri (strain AV19 / DSM 6324 / JCM 9639 / NBRC 100938)).